The following is a 379-amino-acid chain: Tryptophan 2,3-dioxygenase (379 aa).

Substrate contacts are provided by residues 57 to 61 (FIITH) and R128. A heme-binding site is contributed by H312. T327 serves as a coordination point for substrate.

This sequence belongs to the tryptophan 2,3-dioxygenase family. In terms of assembly, homotetramer. Dimer of dimers. Heme serves as cofactor.

It catalyses the reaction L-tryptophan + O2 = N-formyl-L-kynurenine. Its pathway is amino-acid degradation; L-tryptophan degradation via kynurenine pathway; L-kynurenine from L-tryptophan: step 1/2. It participates in pigment biosynthesis; ommochrome biosynthesis. Heme-dependent dioxygenase that catalyzes the oxidative cleavage of the L-tryptophan (L-Trp) pyrrole ring and converts L-tryptophan to N-formyl-L-kynurenine. Catalyzes the oxidative cleavage of the indole moiety. The chain is Tryptophan 2,3-dioxygenase from Drosophila sechellia (Fruit fly).